A 482-amino-acid polypeptide reads, in one-letter code: tRNA sulfurtransferase (482 aa).

The THUMP domain occupies 61-165 (LAIRDALTRI…DDRLLLIKGR (105 aa)). Residues 183-184 (LI), lysine 265, glycine 287, and glutamine 296 each bind ATP. Cysteine 344 and cysteine 456 are oxidised to a cystine. Positions 404-482 (FGPNDVILDI…GFNNVKVYRP (79 aa)) constitute a Rhodanese domain. Cysteine 456 acts as the Cysteine persulfide intermediate in catalysis.

This sequence belongs to the ThiI family.

It is found in the cytoplasm. It carries out the reaction [ThiI sulfur-carrier protein]-S-sulfanyl-L-cysteine + a uridine in tRNA + 2 reduced [2Fe-2S]-[ferredoxin] + ATP + H(+) = [ThiI sulfur-carrier protein]-L-cysteine + a 4-thiouridine in tRNA + 2 oxidized [2Fe-2S]-[ferredoxin] + AMP + diphosphate. The enzyme catalyses [ThiS sulfur-carrier protein]-C-terminal Gly-Gly-AMP + S-sulfanyl-L-cysteinyl-[cysteine desulfurase] + AH2 = [ThiS sulfur-carrier protein]-C-terminal-Gly-aminoethanethioate + L-cysteinyl-[cysteine desulfurase] + A + AMP + 2 H(+). Its pathway is cofactor biosynthesis; thiamine diphosphate biosynthesis. Functionally, catalyzes the ATP-dependent transfer of a sulfur to tRNA to produce 4-thiouridine in position 8 of tRNAs, which functions as a near-UV photosensor. Also catalyzes the transfer of sulfur to the sulfur carrier protein ThiS, forming ThiS-thiocarboxylate. This is a step in the synthesis of thiazole, in the thiamine biosynthesis pathway. The sulfur is donated as persulfide by IscS. The polypeptide is tRNA sulfurtransferase (Escherichia coli (strain K12 / MC4100 / BW2952)).